The sequence spans 709 residues: PP2C-like domain-containing protein CG9801 (709 aa).

Disordered regions lie at residues 121 to 222, 503 to 530, and 678 to 709; these read DCYG…NSER, LHPS…SRPK, and GGGE…ETNF. Residues 130-143 are compositionally biased toward polar residues; the sequence is PPVQVATQNSTRLT. Low complexity predominate over residues 182–196; it reads ANLAAASAGTDAGKA. The segment covering 197–217 has biased composition (polar residues); sequence NSDQNNRNVLNAKTEVSTDGD. The 245-residue stretch at 259–503 folds into the PPM-type phosphatase domain; sequence SVSLYETNML…KSASAIYARL (245 aa).

The sequence is that of PP2C-like domain-containing protein CG9801 from Drosophila melanogaster (Fruit fly).